The primary structure comprises 110 residues: Thiosulfate sulfurtransferase GlpE (110 aa).

One can recognise a Rhodanese domain in the interval 17-105; it reads HQGKAVLVDI…WHRHFPAEVE (89 aa). Catalysis depends on Cys-65, which acts as the Cysteine persulfide intermediate.

It belongs to the GlpE family.

The protein localises to the cytoplasm. The catalysed reaction is thiosulfate + hydrogen cyanide = thiocyanate + sulfite + 2 H(+). It carries out the reaction thiosulfate + [thioredoxin]-dithiol = [thioredoxin]-disulfide + hydrogen sulfide + sulfite + 2 H(+). Transferase that catalyzes the transfer of sulfur from thiosulfate to thiophilic acceptors such as cyanide or dithiols. May function in a CysM-independent thiosulfate assimilation pathway by catalyzing the conversion of thiosulfate to sulfite, which can then be used for L-cysteine biosynthesis. The chain is Thiosulfate sulfurtransferase GlpE from Enterobacter sp. (strain 638).